A 327-amino-acid chain; its full sequence is Peroxidase 15 (327 aa).

The first 23 residues, 1–23 (MASFSPLLAMALAIFIFSSHSNA), serve as a signal peptide directing secretion. Pyrrolidone carboxylic acid is present on Gln24. 4 disulfide bridges follow: Cys34-Cys115, Cys67-Cys72, Cys121-Cys323, and Cys200-Cys232. N-linked (GlcNAc...) asparagine glycosylation occurs at Asn36. His65 (proton acceptor) is an active-site residue. Positions 66, 69, 71, 73, and 75 each coordinate Ca(2+). 3 N-linked (GlcNAc...) asparagine glycosylation sites follow: Asn81, Asn96, and Asn159. Pro163 contacts substrate. N-linked (GlcNAc...) asparagine glycosylation is found at Asn168 and Asn171. His193 lines the heme b pocket. Thr194 contacts Ca(2+). 2 N-linked (GlcNAc...) asparagine glycosylation sites follow: Asn209 and Asn221. Ca(2+)-binding residues include Asp245, Thr248, and Asp253. Residues Asn287 and Asn291 are each glycosylated (N-linked (GlcNAc...) asparagine).

It belongs to the peroxidase family. Classical plant (class III) peroxidase subfamily. It depends on Ca(2+) as a cofactor. Heme b serves as cofactor.

It localises to the secreted. It carries out the reaction 2 a phenolic donor + H2O2 = 2 a phenolic radical donor + 2 H2O. Removal of H(2)O(2), oxidation of toxic reductants, biosynthesis and degradation of lignin, suberization, auxin catabolism, response to environmental stresses such as wounding, pathogen attack and oxidative stress. These functions might be dependent on each isozyme/isoform in each plant tissue. In Ipomoea batatas (Sweet potato), this protein is Peroxidase 15.